A 186-amino-acid chain; its full sequence is Ribosome-recycling factor (186 aa).

Belongs to the RRF family.

It localises to the cytoplasm. In terms of biological role, responsible for the release of ribosomes from messenger RNA at the termination of protein biosynthesis. May increase the efficiency of translation by recycling ribosomes from one round of translation to another. This Chlorobaculum tepidum (strain ATCC 49652 / DSM 12025 / NBRC 103806 / TLS) (Chlorobium tepidum) protein is Ribosome-recycling factor.